Consider the following 298-residue polypeptide: MATH domain and coiled-coil domain-containing protein At3g58280 (298 aa).

The MATH domain occupies lysine 9–valine 128. Residues asparagine 240–alanine 288 are a coiled coil.

The polypeptide is MATH domain and coiled-coil domain-containing protein At3g58280 (Arabidopsis thaliana (Mouse-ear cress)).